Reading from the N-terminus, the 277-residue chain is Histone-lysine N-methyltransferase set-17 (277 aa).

The 112-residue stretch at 135-246 (FRIEESKLPN…INQELLVWYG (112 aa)) folds into the SET domain. Y245 provides a ligand contact to S-adenosyl-L-methionine.

This sequence belongs to the class V-like SAM-binding methyltransferase superfamily. As to expression, expressed in the germline. Predominantly expressed in primary spermatocytes. Also expressed in the oocyte-producing germline of hermaphrodites.

The protein resides in the nucleus. The enzyme catalyses N(6)-methyl-L-lysyl(4)-[histone H3] + S-adenosyl-L-methionine = N(6),N(6)-dimethyl-L-lysyl(4)-[histone H3] + S-adenosyl-L-homocysteine + H(+). It carries out the reaction L-lysyl(4)-[histone H3] + S-adenosyl-L-methionine = N(6)-methyl-L-lysyl(4)-[histone H3] + S-adenosyl-L-homocysteine + H(+). Functionally, histone methyltransferase that specifically mono- and di-methylates 'Lys-4' of histone H3 in vitro. Does not tri-methylate 'Lys-4' of histone H3 in vitro. Promotes spermatid development and fertility by positively regulating the transcription of spermatocyte-specific genes in primary spermatocytes. Together with spr-5, required for transgenerational fertility. The protein is Histone-lysine N-methyltransferase set-17 of Caenorhabditis elegans.